A 150-amino-acid polypeptide reads, in one-letter code: SsrA-binding protein (150 aa).

The protein belongs to the SmpB family.

It is found in the cytoplasm. Functionally, required for rescue of stalled ribosomes mediated by trans-translation. Binds to transfer-messenger RNA (tmRNA), required for stable association of tmRNA with ribosomes. tmRNA and SmpB together mimic tRNA shape, replacing the anticodon stem-loop with SmpB. tmRNA is encoded by the ssrA gene; the 2 termini fold to resemble tRNA(Ala) and it encodes a 'tag peptide', a short internal open reading frame. During trans-translation Ala-aminoacylated tmRNA acts like a tRNA, entering the A-site of stalled ribosomes, displacing the stalled mRNA. The ribosome then switches to translate the ORF on the tmRNA; the nascent peptide is terminated with the 'tag peptide' encoded by the tmRNA and targeted for degradation. The ribosome is freed to recommence translation, which seems to be the essential function of trans-translation. In Campylobacter jejuni subsp. jejuni serotype O:6 (strain 81116 / NCTC 11828), this protein is SsrA-binding protein.